Here is a 315-residue protein sequence, read N- to C-terminus: Protein-export membrane protein SecF (315 aa).

Helical transmembrane passes span 35–55 (MVLY…VHFP), 152–172 (QGIK…FLFF), 181–201 (IIFS…ILGI), 205–225 (TATI…NILL), 242–264 (LSAV…ILWL), and 282–302 (LLAD…WYIA).

It belongs to the SecD/SecF family. SecF subfamily. Part of the protein translocation apparatus. Forms a complex with SecD.

It localises to the cell membrane. In terms of biological role, involved in protein export. The polypeptide is Protein-export membrane protein SecF (Thermococcus gammatolerans (strain DSM 15229 / JCM 11827 / EJ3)).